The chain runs to 371 residues: Bifunctional enzyme IspD/IspF (371 aa).

A 2-C-methyl-D-erythritol 4-phosphate cytidylyltransferase region spans residues 1–214 (MNSCFIILAG…NSDIKFNNLI (214 aa)). The interval 215–371 (KFGIGFDVHR…EVIASVIKND (157 aa)) is 2-C-methyl-D-erythritol 2,4-cyclodiphosphate synthase. Residues Asp221 and His223 each contribute to the a divalent metal cation site. 4-CDP-2-C-methyl-D-erythritol 2-phosphate-binding positions include 221–223 (DVH) and 247–248 (HS). His255 is an a divalent metal cation binding site. Residues 269–271 (DIG), 274–278 (FSDKN), and Lys355 contribute to the 4-CDP-2-C-methyl-D-erythritol 2-phosphate site.

In the N-terminal section; belongs to the IspD/TarI cytidylyltransferase family. IspD subfamily. The protein in the C-terminal section; belongs to the IspF family. It depends on a divalent metal cation as a cofactor.

It carries out the reaction 2-C-methyl-D-erythritol 4-phosphate + CTP + H(+) = 4-CDP-2-C-methyl-D-erythritol + diphosphate. It catalyses the reaction 4-CDP-2-C-methyl-D-erythritol 2-phosphate = 2-C-methyl-D-erythritol 2,4-cyclic diphosphate + CMP. The protein operates within isoprenoid biosynthesis; isopentenyl diphosphate biosynthesis via DXP pathway; isopentenyl diphosphate from 1-deoxy-D-xylulose 5-phosphate: step 2/6. It participates in isoprenoid biosynthesis; isopentenyl diphosphate biosynthesis via DXP pathway; isopentenyl diphosphate from 1-deoxy-D-xylulose 5-phosphate: step 4/6. Bifunctional enzyme that catalyzes the formation of 4-diphosphocytidyl-2-C-methyl-D-erythritol from CTP and 2-C-methyl-D-erythritol 4-phosphate (MEP) (IspD), and catalyzes the conversion of 4-diphosphocytidyl-2-C-methyl-D-erythritol 2-phosphate (CDP-ME2P) to 2-C-methyl-D-erythritol 2,4-cyclodiphosphate (ME-CPP) with a corresponding release of cytidine 5-monophosphate (CMP) (IspF). The polypeptide is Bifunctional enzyme IspD/IspF (Pelagibacter ubique (strain HTCC1062)).